We begin with the raw amino-acid sequence, 1244 residues long: Superkiller complex protein 2 (1244 aa).

The disordered stretch occupies residues 218 to 249; that stretch reads LDLSGGDEDEGEAAGGPRGDNASPSPSGTPLV. Phosphoserine is present on residues Ser-242 and Ser-253. The Helicase ATP-binding domain occupies 316-472; sequence ILHLEQHDSV…WIGRLKRRQI (157 aa). 329-336 is an ATP binding site; it reads AHTSAGKT. The DEVH box signature appears at 420–423; that stretch reads DEVH. Positions 582–752 constitute a Helicase C-terminal domain; it reads GLTSLDLTTS…LTYTMILNLL (171 aa).

Belongs to the helicase family. SKI2 subfamily. In terms of assembly, component of the SKI complex which consists of SKIC2, SKIC3 and SKIC8. Interacts with HBS1L isoform 2.

The protein resides in the nucleus. It is found in the cytoplasm. It catalyses the reaction ATP + H2O = ADP + phosphate + H(+). Functionally, helicase component of the SKI complex, a multiprotein complex that assists the RNA-degrading exosome during the mRNA decay and quality-control pathways. The SKI complex catalyzes mRNA extraction from 80S ribosomal complexes in the 3'-5' direction and channels mRNA to the cytosolic exosome for degradation. SKI-mediated extraction of mRNA from stalled ribosomes allow binding of the Pelota-HBS1L complex and subsequent ribosome disassembly by ABCE1 for ribosome recycling. In the nucleus, the SKI complex associates with transcriptionally active genes in a manner dependent on PAF1 complex (PAF1C). In Mus musculus (Mouse), this protein is Superkiller complex protein 2.